Here is a 61-residue protein sequence, read N- to C-terminus: Short neurotoxin 2 (61 aa).

4 disulfide bridges follow: Cys3-Cys23, Cys17-Cys40, Cys42-Cys53, and Cys54-Cys59.

This sequence belongs to the three-finger toxin family. Short-chain subfamily. Type I alpha-neurotoxin sub-subfamily. As to expression, expressed by the venom gland.

The protein resides in the secreted. Its function is as follows. Binds to muscle nicotinic acetylcholine receptor (nAChR) and inhibit acetylcholine from binding to the receptor, thereby impairing neuromuscular transmission. This is Short neurotoxin 2 from Naja nivea (Cape cobra).